The sequence spans 337 residues: Protein FAM76B (337 aa).

The segment at 143–241 is disordered; that stretch reads EQRKSLGSTH…INQSTDSGGT (99 aa). The span at 147–159 shows a compositional bias: low complexity; the sequence is SLGSTHSNSSSSS. Residues 166 to 187 are compositionally biased toward basic residues; the sequence is HHSKHHHHHHHHHRHSSSHHKI. Positions 213-222 are enriched in basic and acidic residues; sequence TPKKKPKLEF. Residues 226–241 show a composition bias toward polar residues; it reads NGDSSSINQSTDSGGT. Residues 301 to 326 adopt a coiled-coil conformation; sequence KDFVEQLQGKNRELLKQVAALSKGKK.

The protein belongs to the FAM76 family.

In terms of biological role, plays a role in hematopoiesis and immune system development, and participates in the inflammatory response. This Xenopus laevis (African clawed frog) protein is Protein FAM76B (fam76b).